The following is a 462-amino-acid chain: tRNA-2-methylthio-N(6)-dimethylallyladenosine synthase (462 aa).

One can recognise an MTTase N-terminal domain in the interval 2–117; that stretch reads KRYFIHTFGC…LPDIIGRVSA (116 aa). [4Fe-4S] cluster contacts are provided by Cys11, Cys47, Cys80, Cys157, Cys161, and Cys164. The Radical SAM core domain occupies 143–372; the sequence is SRGKVTEFVT…QKLQRRISGE (230 aa). In terms of domain architecture, TRAM spans 375 to 437; it reads AALVGSEVEV…PNQLAGKQVA (63 aa).

The protein belongs to the methylthiotransferase family. MiaB subfamily. In terms of assembly, monomer. [4Fe-4S] cluster is required as a cofactor.

It localises to the cytoplasm. It carries out the reaction N(6)-dimethylallyladenosine(37) in tRNA + (sulfur carrier)-SH + AH2 + 2 S-adenosyl-L-methionine = 2-methylsulfanyl-N(6)-dimethylallyladenosine(37) in tRNA + (sulfur carrier)-H + 5'-deoxyadenosine + L-methionine + A + S-adenosyl-L-homocysteine + 2 H(+). In terms of biological role, catalyzes the methylthiolation of N6-(dimethylallyl)adenosine (i(6)A), leading to the formation of 2-methylthio-N6-(dimethylallyl)adenosine (ms(2)i(6)A) at position 37 in tRNAs that read codons beginning with uridine. In Myxococcus xanthus (strain DK1622), this protein is tRNA-2-methylthio-N(6)-dimethylallyladenosine synthase.